Reading from the N-terminus, the 768-residue chain is DNA replication licensing factor MCM3 homolog 2 (768 aa).

An MCM domain is found at 290–497 (TFDLLGNSLA…IDRQISEHVA (208 aa)). ATP is bound at residue 340-347 (GDPSVAKS). Positions 472–475 (SRFD) match the Arginine finger motif. Residues 661-670 (EMKQQADHDA) are compositionally biased toward basic and acidic residues. Residues 661 to 689 (EMKQQADHDAGATGGTVDGHGSSGNDPMD) form a disordered region. The span at 672–682 (ATGGTVDGHGS) shows a compositional bias: gly residues.

Belongs to the MCM family.

It is found in the nucleus. It carries out the reaction ATP + H2O = ADP + phosphate + H(+). Acts as a factor that allows the DNA to undergo a single round of replication per cell cycle. Required for DNA replication and cell proliferation. May act as a component of the MCM complex which is the putative replicative helicase of the replication licensing system in eukaryotic cells. The sequence is that of DNA replication licensing factor MCM3 homolog 2 (ROA2) from Zea mays (Maize).